Consider the following 573-residue polypeptide: Solute carrier family 41 member 2 (573 aa).

The Extracellular portion of the chain corresponds to 1–162 (MTNSKGRSIT…KESSGIMALQ (162 aa)). S136 and S137 each carry phosphoserine. Residues 163–183 (ILVPFLLAGFGTVSAGMVLDI) form a helical membrane-spanning segment. Residues 184–195 (VQHWEVFRKVTE) are Cytoplasmic-facing. A helical transmembrane segment spans residues 196 to 216 (VFILVPALLGLKGNLEMTLAS). Topologically, residues 217 to 245 (RLSTAVNIGKMDSPIEKWNLIIGNLALKQ) are extracellular. Residues 246–266 (VQATVVGFLAAVAAIILGWIP) traverse the membrane as a helical segment. Residues 267–282 (EGKYYLDHSILLCSSS) are Cytoplasmic-facing. The helical transmembrane segment at 283–303 (VATAFIASLLQGIIMVGVIVG) threads the bilayer. Residues 304–313 (SKKTGINPDN) are Extracellular-facing. The chain crosses the membrane as a helical span at residues 314–334 (VATPIAASFGDLITLAILAWI). Residues 335–347 (SQGLYSCLETYYY) are Cytoplasmic-facing. The helical transmembrane segment at 348 to 368 (ISPLVGVFFLALTPIWIIIAA) threads the bilayer. The Extracellular portion of the chain corresponds to 369 to 376 (KHPATRTV). Residues 377-397 (LHSGWEPVITAMVISSIGGLI) traverse the membrane as a helical segment. At 398–406 (LDTTVSDPN) the chain is on the cytoplasmic side. A helical transmembrane segment spans residues 407–427 (LVGIVVYTPVINGIGGNLVAI). Residues 428-469 (QASRISTYLHLHSIPGELPDEPKGCYYPFRTFFGPGVNNKSA) lie on the Extracellular side of the membrane. Residues 470-490 (QVLLLLVIPGHLIFLYTIHLM) traverse the membrane as a helical segment. At 491-498 (KSGHTSLT) the chain is on the cytoplasmic side. A helical membrane pass occupies residues 499–519 (IIFIVVYLFGAVLQVFTLLWI). Residues 520–543 (ADWMVHHFWRKGKDPDSFSIPYLT) lie on the Extracellular side of the membrane. The chain crosses the membrane as a helical span at residues 544 to 564 (ALGDLLGTALLALSFHFLWLI). Over 565–573 (GDRDGDVGD) the chain is Cytoplasmic.

Belongs to the SLC41A transporter family.

The protein localises to the cell membrane. It catalyses the reaction Mg(2+)(in) = Mg(2+)(out). The catalysed reaction is Mn(2+)(in) = Mn(2+)(out). The enzyme catalyses Co(2+)(in) = Co(2+)(out). It carries out the reaction Ni(2+)(in) = Ni(2+)(out). It catalyses the reaction Fe(2+)(in) = Fe(2+)(out). Acts as a plasma-membrane magnesium transporter. Can also mediate the transport of other divalent metal cations in an order of Ba(2+) &gt; Ni(2+) &gt; Co(2+) &gt; Fe(2+) &gt; Mn(2+). The sequence is that of Solute carrier family 41 member 2 (SLC41A2) from Homo sapiens (Human).